We begin with the raw amino-acid sequence, 156 residues long: Small ribosomal subunit protein uS7 (156 aa).

This sequence belongs to the universal ribosomal protein uS7 family. Part of the 30S ribosomal subunit. Contacts proteins S9 and S11.

Its function is as follows. One of the primary rRNA binding proteins, it binds directly to 16S rRNA where it nucleates assembly of the head domain of the 30S subunit. Is located at the subunit interface close to the decoding center, probably blocks exit of the E-site tRNA. The protein is Small ribosomal subunit protein uS7 of Campylobacter hominis (strain ATCC BAA-381 / DSM 21671 / CCUG 45161 / LMG 19568 / NCTC 13146 / CH001A).